The following is a 117-amino-acid chain: Large ribosomal subunit protein eL8 (117 aa).

This sequence belongs to the eukaryotic ribosomal protein eL8 family. Part of the 50S ribosomal subunit. Probably part of the RNase P complex.

The protein resides in the cytoplasm. Its function is as follows. Multifunctional RNA-binding protein that recognizes the K-turn motif in ribosomal RNA, the RNA component of RNase P, box H/ACA, box C/D and box C'/D' sRNAs. The chain is Large ribosomal subunit protein eL8 from Methanococcus aeolicus (strain ATCC BAA-1280 / DSM 17508 / OCM 812 / Nankai-3).